We begin with the raw amino-acid sequence, 218 residues long: Protein GrpE (218 aa).

Composition is skewed to basic and acidic residues over residues 1–13 (MSKN…HQNN) and 20–32 (VDKK…NKQE). The interval 1–32 (MSKNNENIKHQNNDKVNNQVDKKETKNHNKQE) is disordered.

Belongs to the GrpE family. As to quaternary structure, homodimer.

It localises to the cytoplasm. Functionally, participates actively in the response to hyperosmotic and heat shock by preventing the aggregation of stress-denatured proteins, in association with DnaK and GrpE. It is the nucleotide exchange factor for DnaK and may function as a thermosensor. Unfolded proteins bind initially to DnaJ; upon interaction with the DnaJ-bound protein, DnaK hydrolyzes its bound ATP, resulting in the formation of a stable complex. GrpE releases ADP from DnaK; ATP binding to DnaK triggers the release of the substrate protein, thus completing the reaction cycle. Several rounds of ATP-dependent interactions between DnaJ, DnaK and GrpE are required for fully efficient folding. This is Protein GrpE from Ureaplasma parvum serovar 3 (strain ATCC 27815 / 27 / NCTC 11736).